A 146-amino-acid chain; its full sequence is 3-hydroxyacyl-[acyl-carrier-protein] dehydratase FabZ (146 aa).

The active site involves H49.

It belongs to the thioester dehydratase family. FabZ subfamily.

The protein localises to the cytoplasm. It catalyses the reaction a (3R)-hydroxyacyl-[ACP] = a (2E)-enoyl-[ACP] + H2O. In terms of biological role, involved in unsaturated fatty acids biosynthesis. Catalyzes the dehydration of short chain beta-hydroxyacyl-ACPs and long chain saturated and unsaturated beta-hydroxyacyl-ACPs. The protein is 3-hydroxyacyl-[acyl-carrier-protein] dehydratase FabZ of Ectopseudomonas mendocina (strain ymp) (Pseudomonas mendocina).